Here is a 399-residue protein sequence, read N- to C-terminus: Protein DDI1 homolog 2 (399 aa).

One can recognise a Ubiquitin-like domain in the interval 1-81 (MLLTVYCVRR…VILRQKENAD (81 aa)). Residues 99-134 (IAVPGTSSPRQRQPPGTQQSHSSPGEITSSPQGLDN) are disordered. The segment covering 103–131 (GTSSPRQRQPPGTQQSHSSPGEITSSPQG) has biased composition (polar residues). T104 carries the post-translational modification Phosphothreonine. Residues S106, S121, S128, S150, and S194 each carry the phosphoserine modification. D252 is an active-site residue. The Ubiquitin-binding motif lies at 376–395 (EEIADQELAEALQKSAEDAE).

Belongs to the DDI1 family. Homodimer. Interacts with MCM6; PCNA; PSMD4; PSMD8; RPA2 and RPN2. Interacts with RTF2.

Its subcellular location is the cytoplasm. It is found in the cytosol. The protein resides in the chromosome. Its function is as follows. Aspartic protease that mediates the cleavage of NFE2L1/NRF1 at 'Leu-104', thereby promoting release of NFE2L1/NRF1 from the endoplasmic reticulum membrane. Ubiquitination of NFE2L1/NRF1 is a prerequisite for cleavage, suggesting that DDI2 specifically recognizes and binds ubiquitinated NFE2L1/NRF1. Seems to act as a proteasomal shuttle which links the proteasome and replication fork proteins like RTF2. Required, with DDI1, for cellular survival following replication stress. Together or redudantly with DDI1, removes RTF2 from stalled forks to allow cell cycle progression after replication stress and maintains genome integrity. The chain is Protein DDI1 homolog 2 from Homo sapiens (Human).